The primary structure comprises 320 residues: ATP-dependent 6-phosphofructokinase (320 aa).

Glycine 12 serves as a coordination point for ATP. ADP-binding positions include 22–26 (RGVVR) and 55–60 (RYSVSD). Residues 73 to 74 (RF) and 103 to 106 (GDGS) each bind ATP. Residue aspartate 104 coordinates Mg(2+). 126–128 (TID) serves as a coordination point for substrate. Aspartate 128 acts as the Proton acceptor in catalysis. Residue arginine 155 coordinates ADP. Substrate is bound by residues arginine 163 and 170 to 172 (MGR). ADP-binding positions include 186 to 188 (GCE), lysine 212, and 214 to 216 (KKH). Substrate contacts are provided by residues glutamate 223, arginine 244, and 250-253 (HIQR).

It belongs to the phosphofructokinase type A (PFKA) family. ATP-dependent PFK group I subfamily. Prokaryotic clade 'B1' sub-subfamily. Homotetramer. The cofactor is Mg(2+).

The protein localises to the cytoplasm. It carries out the reaction beta-D-fructose 6-phosphate + ATP = beta-D-fructose 1,6-bisphosphate + ADP + H(+). It participates in carbohydrate degradation; glycolysis; D-glyceraldehyde 3-phosphate and glycerone phosphate from D-glucose: step 3/4. Its activity is regulated as follows. Allosterically activated by ADP and other diphosphonucleosides, and allosterically inhibited by phosphoenolpyruvate. In terms of biological role, catalyzes the phosphorylation of D-fructose 6-phosphate to fructose 1,6-bisphosphate by ATP, the first committing step of glycolysis. The chain is ATP-dependent 6-phosphofructokinase from Citrobacter koseri (strain ATCC BAA-895 / CDC 4225-83 / SGSC4696).